Here is a 295-residue protein sequence, read N- to C-terminus: MIEVLTTTDSQKLLHQLNALLEQELRCQPKVCGLRLIESAHDNGLRMTARLRDFEVKDLLSLTQFFGFDTETFSLAVNLLDRFLSKMKVQPKHLGCVGLSCFYLAVKSTEEERNVPLATDLIRISQYRFTVSDLMRMEKIVLEKVCWKVKATTAFQFLQLYYSLLQENVPHERKSSLNFERLEAQLKACYCRIIFSKAKPSVLALSIIALEIQAQKYIELTEGVERLQKHSKISGRDLTFWQELVSKCLAEYSSNKCAKPNVQKLKWIVSGRTARQLRHSYYRITHLPTIPETVP.

This sequence belongs to the cyclin family. Cyclin G subfamily.

It localises to the nucleus. Functionally, may play a role in growth regulation. Is associated with G2/M phase arrest in response to DNA damage. May be an intermediate by which p53 mediates its role as an inhibitor of cellular proliferation. The sequence is that of Cyclin-G1 (CCNG1) from Bos taurus (Bovine).